A 179-amino-acid polypeptide reads, in one-letter code: uncharacterized protein (179 aa).

Residues 139-172 (IEDLGKYIKSDRIEKEALREELEKILNTLVKHLE) are a coiled coil.

This is an uncharacterized protein from Methanocaldococcus jannaschii (strain ATCC 43067 / DSM 2661 / JAL-1 / JCM 10045 / NBRC 100440) (Methanococcus jannaschii).